Consider the following 575-residue polypeptide: Hemagglutinin-neuraminidase (575 aa).

Topologically, residues 1–34 (MAEKGKTNSSYWSTTRNDNSTVNTYIDTPAGKTH) are intravirion. Residues 35 to 55 (IWLLIATTMHTILSFIIMILC) traverse the membrane as a helical segment. Over 56–575 (IDLIIKQDTC…SIPKICKITS (520 aa)) the chain is Virion surface. N-linked (GlcNAc...) asparagine; by host glycosylation is present at asparagine 77. 4 cysteine pairs are disulfide-bonded: cysteine 192/cysteine 216, cysteine 258/cysteine 271, cysteine 357/cysteine 469, and cysteine 463/cysteine 473. Residues 254–259 (NRKSCS) are involved in neuraminidase activity. N-linked (GlcNAc...) asparagine; by host glycosylation is found at asparagine 499 and asparagine 511. Cysteines 535 and 544 form a disulfide.

Belongs to the paramyxoviruses hemagglutinin-neuraminidase family. As to quaternary structure, homotetramer; composed of disulfide-linked homodimers. Interacts with F protein trimer.

Its subcellular location is the virion membrane. It localises to the host cell membrane. It carries out the reaction Hydrolysis of alpha-(2-&gt;3)-, alpha-(2-&gt;6)-, alpha-(2-&gt;8)- glycosidic linkages of terminal sialic acid residues in oligosaccharides, glycoproteins, glycolipids, colominic acid and synthetic substrates.. Functionally, attaches the virus to sialic acid-containing cell receptors and thereby initiating infection. Binding of HN protein to the receptor induces a conformational change that allows the F protein to trigger virion/cell membranes fusion. In terms of biological role, neuraminidase activity ensures the efficient spread of the virus by dissociating the mature virions from the neuraminic acid containing glycoproteins. The sequence is that of Hemagglutinin-neuraminidase (HN) from Human parainfluenza 1 virus (strain Washington/1957) (HPIV-1).